The following is a 254-amino-acid chain: UPF0173 protein YddR (254 aa).

Belongs to the UPF0173 family.

The protein is UPF0173 protein YddR (yddR) of Bacillus subtilis (strain 168).